Reading from the N-terminus, the 686-residue chain is Translation initiation factor IF-2 (686 aa).

The disordered stretch occupies residues 54-105 (KPSVADEFEVEEKVVRSKKNSNKKKKKGKGNEDKRQENFAGRQQTQTVETPD). The span at 69-81 (RSKKNSNKKKKKG) shows a compositional bias: basic residues. The tr-type G domain occupies 188–357 (ERPAVVTIMG…LLISEVEEYK (170 aa)). Positions 197–204 (GHVDHGKT) are G1. GTP is bound at residue 197–204 (GHVDHGKT). Positions 222-226 (GITQH) are G2. The segment at 243-246 (DTPG) is G3. Residues 243-247 (DTPGH) and 297-300 (NKMD) contribute to the GTP site. Positions 297 to 300 (NKMD) are G4. Residues 333–335 (SAI) form a G5 region.

The protein belongs to the TRAFAC class translation factor GTPase superfamily. Classic translation factor GTPase family. IF-2 subfamily.

Its subcellular location is the cytoplasm. In terms of biological role, one of the essential components for the initiation of protein synthesis. Protects formylmethionyl-tRNA from spontaneous hydrolysis and promotes its binding to the 30S ribosomal subunits. Also involved in the hydrolysis of GTP during the formation of the 70S ribosomal complex. The protein is Translation initiation factor IF-2 of Bacillus anthracis (strain A0248).